A 288-amino-acid polypeptide reads, in one-letter code: Protease HtpX (288 aa).

The next 2 helical transmembrane spans lie at 4–24 (VMLF…VLNI) and 36–56 (LSGL…ISLM). His143 provides a ligand contact to Zn(2+). Glu144 is an active-site residue. His147 serves as a coordination point for Zn(2+). A run of 2 helical transmembrane segments spans residues 151 to 171 (GDMV…IFLS) and 193 to 213 (MVYF…ASFI). Zn(2+) is bound at residue Glu222.

It belongs to the peptidase M48B family. Zn(2+) is required as a cofactor.

Its subcellular location is the cell inner membrane. The chain is Protease HtpX from Vibrio vulnificus (strain YJ016).